We begin with the raw amino-acid sequence, 706 residues long: K(+)-insensitive pyrophosphate-energized proton pump (706 aa).

5 consecutive transmembrane segments (helical) span residues 1 to 21 (MTALWLIVLCGVLSVVYAIWA), 62 to 82 (IVIFVLLVYFLGFYVAIGFAI), 83 to 103 (GAILSGAAGFIGMNVSVRANV), 128 to 148 (GMLVAGLALLGVTLYFGFLVY), and 164 to 184 (VALGFGASLISIFARLGGGIF). Lys-186 lines the substrate pocket. Asp-189, Asp-193, Asn-216, and Asp-219 together coordinate Mg(2+). Transmembrane regions (helical) follow at residues 231 to 251 (LFETYAVTAVATMVLAAIFFA), 261 to 281 (TLPLAIGGICIITSIIGTFFV), 298 to 318 (IATGVLSLIGIAVVIYTLIGF), 328 to 348 (GMSLFECGVVGLIVTALIIWI), 376 to 398 (IQGLAISMEATALPAIVIIAGIL), and 412 to 432 (ATATMLALAGMIVALDAFGPV). Asp-434 serves as a coordination point for Mg(2+). 4 helical membrane passes run 465 to 485 (AVTKGYAIGSAGLGALVLFAA), 516 to 536 (YVVVGLLFGGLLPYLFGAMGM), 585 to 605 (IIPSLLPVLSPIVVYFLIYAI), and 616 to 636 (AFSAVGAMLLGVIVTGLFVAI). The Ca(2+) site is built by Asp-646, Asp-672, and Asp-676. Lys-679 provides a ligand contact to substrate. Residues 685–705 (AVNPMIKITNIVALLLLAILA) traverse the membrane as a helical segment.

This sequence belongs to the H(+)-translocating pyrophosphatase (TC 3.A.10) family. K(+)-insensitive subfamily. Homodimer. Mg(2+) serves as cofactor.

The protein resides in the cell inner membrane. It catalyses the reaction diphosphate + H2O + H(+)(in) = 2 phosphate + 2 H(+)(out). In terms of biological role, proton pump that utilizes the energy of pyrophosphate hydrolysis as the driving force for proton movement across the membrane. Generates a proton motive force. The sequence is that of K(+)-insensitive pyrophosphate-energized proton pump from Bradyrhizobium diazoefficiens (strain JCM 10833 / BCRC 13528 / IAM 13628 / NBRC 14792 / USDA 110).